The sequence spans 459 residues: Phosphomethylpyrimidine synthase (459 aa).

Substrate is bound by residues Asn-80, Met-109, Tyr-139, His-175, 195–197 (SRG), 236–239 (DSLR), and Glu-275. Position 279 (His-279) interacts with Zn(2+). Position 302 (Tyr-302) interacts with substrate. Zn(2+) is bound at residue His-343. Positions 423, 426, and 431 each coordinate [4Fe-4S] cluster.

It belongs to the ThiC family. The cofactor is [4Fe-4S] cluster.

The enzyme catalyses 5-amino-1-(5-phospho-beta-D-ribosyl)imidazole + S-adenosyl-L-methionine = 4-amino-2-methyl-5-(phosphooxymethyl)pyrimidine + CO + 5'-deoxyadenosine + formate + L-methionine + 3 H(+). The protein operates within cofactor biosynthesis; thiamine diphosphate biosynthesis. In terms of biological role, catalyzes the synthesis of the hydroxymethylpyrimidine phosphate (HMP-P) moiety of thiamine from aminoimidazole ribotide (AIR) in a radical S-adenosyl-L-methionine (SAM)-dependent reaction. In Gloeothece citriformis (strain PCC 7424) (Cyanothece sp. (strain PCC 7424)), this protein is Phosphomethylpyrimidine synthase.